Here is a 266-residue protein sequence, read N- to C-terminus: Type II iodothyronine deiodinase (266 aa).

Residues 1–13 (MGSASEDLLVTLQ) are Lumenal-facing. A helical; Signal-anchor for type III membrane protein transmembrane segment spans residues 14–34 (ILPGFFSNCLFLALYDSVVLV). Topologically, residues 35-266 (KRVVALLSRS…QWLELSYGRR (232 aa)) are cytoplasmic. Sec-134 is an active-site residue. Sec-134 is a non-standard amino acid (selenocysteine).

It belongs to the iodothyronine deiodinase family. As to quaternary structure, predominantly monomer. Can form homodimers but homodimerization is not essential for enzyme activity.

The protein localises to the endoplasmic reticulum membrane. The enzyme catalyses 3,3',5-triiodo-L-thyronine + iodide + A + H(+) = L-thyroxine + AH2. It carries out the reaction 3,3'-diiodo-L-thyronine + iodide + A + H(+) = 3,3',5'-triiodo-L-thyronine + AH2. It catalyses the reaction 3'-iodo-L-thyronine + iodide + A + H(+) = 3',5'-diiodo-L-thyronine + AH2. Not inhibited by N(6)-propylthiouracil. Plays a crucial role in the metabolism of thyroid hormones (TH) and has specific roles in TH activation and inactivation by deiodination. Catalyzes the conversion of T4 (L-thyroxine/3,5,3',5'-tetraiodothyronine) to T3 (3,5,3'-triiodothyronine) and rT3 (3,3',5'-triiodothyronine) to T2 (3,3'-diiodothyronine) via outer-ring deiodination (ORD). Catalyzes the conversion 3',5'-T2 (3,5-diiodothyronine) to 3-T1 (3-monoiodothyronine) via ORD. The chain is Type II iodothyronine deiodinase (dio2) from Fundulus heteroclitus (Killifish).